We begin with the raw amino-acid sequence, 509 residues long: tRNA-2-methylthio-N(6)-dimethylallyladenosine synthase (509 aa).

Over residues 1–15 (MNEQQRLASQQVNSS) the composition is skewed to polar residues. The disordered stretch occupies residues 1-26 (MNEQQRLASQQVNSSTKKEEKDYSKY). Positions 16-25 (TKKEEKDYSK) are enriched in basic and acidic residues. Residues 66–184 (RKFYIRTYGC…LPYILKDAMF (119 aa)) enclose the MTTase N-terminal domain. [4Fe-4S] cluster contacts are provided by cysteine 75, cysteine 111, cysteine 145, cysteine 221, cysteine 225, and cysteine 228. One can recognise a Radical SAM core domain in the interval 207–437 (RRGDIKAWVN…NALVNKLAIE (231 aa)). One can recognise a TRAM domain in the interval 440–503 (DRYKGQIVEV…TWSLNGELVE (64 aa)).

Belongs to the methylthiotransferase family. MiaB subfamily. In terms of assembly, monomer. [4Fe-4S] cluster serves as cofactor.

The protein localises to the cytoplasm. The enzyme catalyses N(6)-dimethylallyladenosine(37) in tRNA + (sulfur carrier)-SH + AH2 + 2 S-adenosyl-L-methionine = 2-methylsulfanyl-N(6)-dimethylallyladenosine(37) in tRNA + (sulfur carrier)-H + 5'-deoxyadenosine + L-methionine + A + S-adenosyl-L-homocysteine + 2 H(+). In terms of biological role, catalyzes the methylthiolation of N6-(dimethylallyl)adenosine (i(6)A), leading to the formation of 2-methylthio-N6-(dimethylallyl)adenosine (ms(2)i(6)A) at position 37 in tRNAs that read codons beginning with uridine. The polypeptide is tRNA-2-methylthio-N(6)-dimethylallyladenosine synthase (Bacillus thuringiensis (strain Al Hakam)).